The primary structure comprises 257 residues: Imidazole glycerol phosphate synthase subunit HisF (257 aa).

Active-site residues include D11 and D130.

This sequence belongs to the HisA/HisF family. Heterodimer of HisH and HisF.

The protein resides in the cytoplasm. It carries out the reaction 5-[(5-phospho-1-deoxy-D-ribulos-1-ylimino)methylamino]-1-(5-phospho-beta-D-ribosyl)imidazole-4-carboxamide + L-glutamine = D-erythro-1-(imidazol-4-yl)glycerol 3-phosphate + 5-amino-1-(5-phospho-beta-D-ribosyl)imidazole-4-carboxamide + L-glutamate + H(+). Its pathway is amino-acid biosynthesis; L-histidine biosynthesis; L-histidine from 5-phospho-alpha-D-ribose 1-diphosphate: step 5/9. Its function is as follows. IGPS catalyzes the conversion of PRFAR and glutamine to IGP, AICAR and glutamate. The HisF subunit catalyzes the cyclization activity that produces IGP and AICAR from PRFAR using the ammonia provided by the HisH subunit. The sequence is that of Imidazole glycerol phosphate synthase subunit HisF from Pseudoalteromonas translucida (strain TAC 125).